We begin with the raw amino-acid sequence, 498 residues long: ATP synthase subunit beta, chloroplastic (498 aa).

Position 172 to 179 (172 to 179 (GGAGVGKT)) interacts with ATP.

It belongs to the ATPase alpha/beta chains family. As to quaternary structure, F-type ATPases have 2 components, CF(1) - the catalytic core - and CF(0) - the membrane proton channel. CF(1) has five subunits: alpha(3), beta(3), gamma(1), delta(1), epsilon(1). CF(0) has four main subunits: a(1), b(1), b'(1) and c(9-12).

It is found in the plastid. It localises to the chloroplast thylakoid membrane. The catalysed reaction is ATP + H2O + 4 H(+)(in) = ADP + phosphate + 5 H(+)(out). Functionally, produces ATP from ADP in the presence of a proton gradient across the membrane. The catalytic sites are hosted primarily by the beta subunits. The sequence is that of ATP synthase subunit beta, chloroplastic from Oryza nivara (Indian wild rice).